Reading from the N-terminus, the 290-residue chain is Fructokinase (290 aa).

Residue threonine 130 coordinates ATP. Positions 153, 169, 172, and 175 each coordinate Zn(2+). Residues proline 183 and 231 to 235 (GVMEK) contribute to the ATP site.

This sequence belongs to the ROK (NagC/XylR) family. Homodimer. Requires Mg(2+) as cofactor.

The enzyme catalyses D-fructose + ATP = D-fructose 6-phosphate + ADP + H(+). Its activity is regulated as follows. Inactivated by EDTA. Inhibition by zinc ions (Potential). The chain is Fructokinase (scrK) from Lactococcus lactis subsp. cremoris (Streptococcus cremoris).